A 441-amino-acid chain; its full sequence is Peroxisome proliferator-activated receptor delta (441 aa).

Acidic residues predominate over residues 1–22; the sequence is MEQPQEEAPEVREEEEKEEVAE. The tract at residues 1–54 is disordered; the sequence is MEQPQEEAPEVREEEEKEEVAEAEGAPELNGGPQHALPSSSYTDLSRSSSPPSL. A compositionally biased stretch (low complexity) spans 37–54; that stretch reads LPSSSYTDLSRSSSPPSL. Positions 71-145 form a DNA-binding region, nuclear receptor; that stretch reads NMECRVCGDK…LGMSHNAIRF (75 aa). 2 NR C4-type zinc fingers span residues 74 to 94 and 111 to 133; these read CRVCGDKASGFHYGVHACEGC and CERSCKIQKKNRNKCQYCRFQKC. Positions 211–439 constitute an NR LBD domain; the sequence is FVIHDIETLW…HPLLQEIYKD (229 aa).

Belongs to the nuclear hormone receptor family. NR1 subfamily. Heterodimer with the retinoid X receptor. Interacts (via domain NR LBD) with CRY1 and CRY2 in a ligand-dependent manner. In terms of processing, 'Lys-48'-linked polyubiquitinated; leading to proteasomal degradation. Deubiquitinated and stabilized by OTUD3. As to expression, ubiquitous with maximal levels in placenta and skeletal muscle.

It localises to the nucleus. Functionally, ligand-activated transcription factor key mediator of energy metabolism in adipose tissues. Receptor that binds peroxisome proliferators such as hypolipidemic drugs and fatty acids. Has a preference for poly-unsaturated fatty acids, such as gamma-linoleic acid and eicosapentanoic acid. Once activated by a ligand, the receptor binds to promoter elements of target genes. Regulates the peroxisomal beta-oxidation pathway of fatty acids. Functions as transcription activator for the acyl-CoA oxidase gene. Decreases expression of NPC1L1 once activated by a ligand. The polypeptide is Peroxisome proliferator-activated receptor delta (Homo sapiens (Human)).